Here is a 329-residue protein sequence, read N- to C-terminus: Sex comb on midleg-like protein 1 (329 aa).

A phosphoserine mark is found at serine 138 and serine 238. An SAM domain is found at 258 to 325 (WSVEAVVLFL…YYIDRLKQGK (68 aa)).

Belongs to the SCM family.

Its subcellular location is the nucleus. In terms of biological role, putative Polycomb group (PcG) protein. PcG proteins act by forming multiprotein complexes, which are required to maintain the transcriptionally repressive state of homeotic genes throughout development. May be involved in spermatogenesis during sexual maturation. The sequence is that of Sex comb on midleg-like protein 1 (SCML1) from Nomascus leucogenys (Northern white-cheeked gibbon).